We begin with the raw amino-acid sequence, 239 residues long: Putative glutamine amidotransferase-like protein YfeJ (239 aa).

The Glutamine amidotransferase type-1 domain occupies 1 to 200 (MRVHFVVHES…IQHSQQELAD (200 aa)).

The polypeptide is Putative glutamine amidotransferase-like protein YfeJ (yfeJ) (Salmonella typhimurium (strain LT2 / SGSC1412 / ATCC 700720)).